Reading from the N-terminus, the 269-residue chain is MKNTFDPLRIGDKSFSSRLMLGTGKYRTSEDAINSIKKSECDIVTVAIRRLPTNINSDNISFLKSLDWEKLWLLPNTAGSQTAEDAIRMAFLGHELACQLGQEDNFFVKLEVISDPKYLLPDPIGTLKAAEFLVKKGFTVLPYINADPMLALHLEDLGCATVMPLGSPIGSGQGLNNLANLQIIIENANIPVIVDAGIGAPSEATMAMELGADGVLLNTAVAQSKNPEQMAFAMNLGVQSGRLGYLAGRMEKKQYANPSSPVSQISKIY.

Residue Lys-109 is the Schiff-base intermediate with DXP of the active site. 1-deoxy-D-xylulose 5-phosphate contacts are provided by residues Gly-170, Ala-196–Gly-197, and Asn-218–Thr-219.

This sequence belongs to the ThiG family. In terms of assembly, homotetramer. Forms heterodimers with either ThiH or ThiS.

Its subcellular location is the plastid. The protein resides in the chloroplast. The catalysed reaction is [ThiS sulfur-carrier protein]-C-terminal-Gly-aminoethanethioate + 2-iminoacetate + 1-deoxy-D-xylulose 5-phosphate = [ThiS sulfur-carrier protein]-C-terminal Gly-Gly + 2-[(2R,5Z)-2-carboxy-4-methylthiazol-5(2H)-ylidene]ethyl phosphate + 2 H2O + H(+). Its pathway is cofactor biosynthesis; thiamine diphosphate biosynthesis. Catalyzes the rearrangement of 1-deoxy-D-xylulose 5-phosphate (DXP) to produce the thiazole phosphate moiety of thiamine. Sulfur is provided by the thiocarboxylate moiety of the carrier protein ThiS. In vitro, sulfur can be provided by H(2)S. The sequence is that of Thiazole synthase from Thalassiosira pseudonana (Marine diatom).